Reading from the N-terminus, the 64-residue chain is DNA-binding protein 7a (64 aa).

It belongs to the 7 kDa DNA-binding/endoribonuclease P2 family. As to quaternary structure, monomer.

The protein resides in the cytoplasm. Can constrain negative DNA supercoils. May be involved in maintaining the integrity of the genome at high temperature. The sequence is that of DNA-binding protein 7a from Saccharolobus islandicus (strain L.D.8.5 / Lassen #2) (Sulfolobus islandicus).